The following is a 92-amino-acid chain: Cell division protein FtsB (92 aa).

Residues 1-3 lie on the Cytoplasmic side of the membrane; sequence MRL. The helical transmembrane segment at 4-21 threads the bilayer; sequence LILILLSVLVLFQYNFWF. Topologically, residues 22–92 are periplasmic; that stretch reads GSNGFLDYRQ…VFYHIVKESK (71 aa). Positions 28-63 form a coiled coil; sequence DYRQNAEKIKENQAENEKLSQRNQRINAEIQGLTKG.

Belongs to the FtsB family. Part of a complex composed of FtsB, FtsL and FtsQ.

Its subcellular location is the cell inner membrane. Functionally, essential cell division protein. May link together the upstream cell division proteins, which are predominantly cytoplasmic, with the downstream cell division proteins, which are predominantly periplasmic. This is Cell division protein FtsB from Haemophilus influenzae (strain 86-028NP).